Here is a 640-residue protein sequence, read N- to C-terminus: UvrABC system protein C (640 aa).

Residues 22–101 (NDPGCYLMKD…IKSHQPYFNV (80 aa)) form the GIY-YIG domain. Positions 211 to 246 (DELRILLEKQMISFSESLKFEEAGSVRDQLKGIDRL) constitute a UVR domain.

Belongs to the UvrC family. Interacts with UvrB in an incision complex.

It is found in the cytoplasm. Its function is as follows. The UvrABC repair system catalyzes the recognition and processing of DNA lesions. UvrC both incises the 5' and 3' sides of the lesion. The N-terminal half is responsible for the 3' incision and the C-terminal half is responsible for the 5' incision. The chain is UvrABC system protein C from Prochlorococcus marinus (strain NATL1A).